The following is a 204-amino-acid chain: High mobility group-T protein (204 aa).

2 consecutive DNA-binding regions (HMG box) follow at residues 8 to 78 (PRGK…RSYI) and 94 to 162 (PKRP…TAYR). The disordered stretch occupies residues 162-204 (RNKGKVPVSMPAKAAAPAKDDDDDDDDDDDDEDDDDDDDEDDE). Over residues 181–204 (DDDDDDDDDDDDEDDDDDDDEDDE) the composition is skewed to acidic residues.

It belongs to the HMGB family.

It localises to the nucleus. The protein resides in the chromosome. Binds preferentially single-stranded DNA and unwinds double-stranded DNA. In Oncorhynchus mykiss (Rainbow trout), this protein is High mobility group-T protein.